Here is a 141-residue protein sequence, read N- to C-terminus: Hemoglobin subunit alpha (141 aa).

One can recognise a Globin domain in the interval 1–141 (VLSPADKTNV…VSTVLTSKYR (141 aa)). Serine 3 is modified (phosphoserine). Residue lysine 7 is modified to N6-succinyllysine. Phosphothreonine is present on threonine 8. The residue at position 11 (lysine 11) is an N6-succinyllysine. The residue at position 16 (lysine 16) is an N6-acetyllysine; alternate. Lysine 16 is modified (N6-succinyllysine; alternate). Serine 35 is modified (phosphoserine). Lysine 40 bears the N6-succinyllysine mark. Histidine 58 is an O2 binding site. Heme b is bound at residue histidine 87. Serine 102 is subject to Phosphoserine. The residue at position 108 (threonine 108) is a Phosphothreonine. Phosphoserine occurs at positions 124 and 131. A phosphothreonine mark is found at threonine 134 and threonine 137. Serine 138 is subject to Phosphoserine.

The protein belongs to the globin family. Heterotetramer of two alpha chains and two beta chains. In terms of tissue distribution, red blood cells.

Functionally, involved in oxygen transport from the lung to the various peripheral tissues. Its function is as follows. Hemopressin acts as an antagonist peptide of the cannabinoid receptor CNR1. Hemopressin-binding efficiently blocks cannabinoid receptor CNR1 and subsequent signaling. This Physeter macrocephalus (Sperm whale) protein is Hemoglobin subunit alpha (HBA).